Consider the following 244-residue polypeptide: tRNA (guanine-N(7)-)-methyltransferase (244 aa).

Residues Glu42, Asp67, Asp94, and Asp116 each contribute to the S-adenosyl-L-methionine site. Asp116 is an active-site residue. Substrate is bound by residues Lys120, Asp150, and 191–194 (TYYE).

The protein belongs to the class I-like SAM-binding methyltransferase superfamily. TrmB family.

It carries out the reaction guanosine(46) in tRNA + S-adenosyl-L-methionine = N(7)-methylguanosine(46) in tRNA + S-adenosyl-L-homocysteine. Its pathway is tRNA modification; N(7)-methylguanine-tRNA biosynthesis. In terms of biological role, catalyzes the formation of N(7)-methylguanine at position 46 (m7G46) in tRNA. The protein is tRNA (guanine-N(7)-)-methyltransferase of Porphyromonas gingivalis (strain ATCC BAA-308 / W83).